The chain runs to 140 residues: 6,7-dimethyl-8-ribityllumazine synthase (140 aa).

Residues F11, 42-44, and 66-68 each bind 5-amino-6-(D-ribitylamino)uracil; these read ALE and VVI. 71 to 72 contributes to the (2S)-2-hydroxy-3-oxobutyl phosphate binding site; it reads ET. The Proton donor role is filled by H74. N98 is a binding site for 5-amino-6-(D-ribitylamino)uracil. R112 provides a ligand contact to (2S)-2-hydroxy-3-oxobutyl phosphate.

The protein belongs to the DMRL synthase family.

The catalysed reaction is (2S)-2-hydroxy-3-oxobutyl phosphate + 5-amino-6-(D-ribitylamino)uracil = 6,7-dimethyl-8-(1-D-ribityl)lumazine + phosphate + 2 H2O + H(+). The protein operates within cofactor biosynthesis; riboflavin biosynthesis; riboflavin from 2-hydroxy-3-oxobutyl phosphate and 5-amino-6-(D-ribitylamino)uracil: step 1/2. Functionally, catalyzes the formation of 6,7-dimethyl-8-ribityllumazine by condensation of 5-amino-6-(D-ribitylamino)uracil with 3,4-dihydroxy-2-butanone 4-phosphate. This is the penultimate step in the biosynthesis of riboflavin. This is 6,7-dimethyl-8-ribityllumazine synthase from Erythrobacter litoralis (strain HTCC2594).